Reading from the N-terminus, the 101-residue chain is Large ribosomal subunit protein uL24 (101 aa).

Belongs to the universal ribosomal protein uL24 family. In terms of assembly, part of the 50S ribosomal subunit.

One of two assembly initiator proteins, it binds directly to the 5'-end of the 23S rRNA, where it nucleates assembly of the 50S subunit. Its function is as follows. One of the proteins that surrounds the polypeptide exit tunnel on the outside of the subunit. The sequence is that of Large ribosomal subunit protein uL24 from Streptococcus thermophilus (strain ATCC BAA-491 / LMD-9).